Reading from the N-terminus, the 217-residue chain is Peroxiredoxin (217 aa).

In terms of domain architecture, Thioredoxin spans 2-159 (VVIGEKFPEV…IVRLVKALQT (158 aa)). Catalysis depends on cysteine 46, which acts as the Cysteine sulfenic acid (-SOH) intermediate. Arginine 122 contributes to the substrate binding site.

It belongs to the peroxiredoxin family. Prx6 subfamily. In terms of assembly, homodecamer. Pentamer of dimers that assemble into a ring structure.

Its subcellular location is the cytoplasm. The catalysed reaction is a hydroperoxide + [thioredoxin]-dithiol = an alcohol + [thioredoxin]-disulfide + H2O. Its function is as follows. Thiol-specific peroxidase that catalyzes the reduction of hydrogen peroxide and organic hydroperoxides to water and alcohols, respectively. Plays a role in cell protection against oxidative stress by detoxifying peroxides. The chain is Peroxiredoxin from Methanococcus maripaludis (strain DSM 14266 / JCM 13030 / NBRC 101832 / S2 / LL).